The following is a 203-amino-acid chain: Outer-membrane lipoprotein carrier protein (203 aa).

Positions 1 to 21 (MKKLLVACCLLSGFASTSVLA) are cleaved as a signal peptide.

It belongs to the LolA family. Monomer.

The protein localises to the periplasm. Its function is as follows. Participates in the translocation of lipoproteins from the inner membrane to the outer membrane. Only forms a complex with a lipoprotein if the residue after the N-terminal Cys is not an aspartate (The Asp acts as a targeting signal to indicate that the lipoprotein should stay in the inner membrane). The sequence is that of Outer-membrane lipoprotein carrier protein from Serratia proteamaculans (strain 568).